The primary structure comprises 379 residues: Putative acetyl-CoA C-acetyltransferase VraB (379 aa).

C86 (acyl-thioester intermediate) is an active-site residue. The Proton acceptor role is filled by H338.

The protein belongs to the thiolase-like superfamily. Thiolase family.

This chain is Putative acetyl-CoA C-acetyltransferase VraB (vraB), found in Staphylococcus aureus (strain MRSA252).